The primary structure comprises 1099 residues: Carbamoyl phosphate synthase large chain (1099 aa).

The interval 1–402 (MPKREDIKRI…ALGKALRSLE (402 aa)) is carboxyphosphate synthetic domain. The ATP site is built by Arg-129, Arg-169, Gly-175, Gly-176, Glu-208, Val-210, Glu-215, Gly-241, Ile-242, His-243, Gln-285, and Glu-299. Positions 133–328 (KETMEKAGLE…IAKVAALLAV (196 aa)) constitute an ATP-grasp 1 domain. Residues Gln-285, Glu-299, and Asn-301 each coordinate Mg(2+). Mn(2+) contacts are provided by Gln-285, Glu-299, and Asn-301. Positions 403 to 541 (LDAAPKLDLE…STYNGVENEA (139 aa)) are oligomerization domain. The interval 542 to 944 (VPSDREKIMI…AFAKAQIAAG (403 aa)) is carbamoyl phosphate synthetic domain. The ATP-grasp 2 domain occupies 666–857 (AKLLKQIGLK…VARIAAKIMV (192 aa)). Arg-702, Lys-741, Leu-743, Glu-748, Gly-773, Val-774, His-775, Ser-776, Gln-816, and Glu-828 together coordinate ATP. Residues Gln-816, Glu-828, and Asn-830 each coordinate Mg(2+). Residues Gln-816, Glu-828, and Asn-830 each coordinate Mn(2+). The region spanning 945-1099 (NPLPTTGAIL…VRRLTDTWKM (155 aa)) is the MGS-like domain. The tract at residues 945 to 1099 (NPLPTTGAIL…VRRLTDTWKM (155 aa)) is allosteric domain.

Belongs to the CarB family. As to quaternary structure, composed of two chains; the small (or glutamine) chain promotes the hydrolysis of glutamine to ammonia, which is used by the large (or ammonia) chain to synthesize carbamoyl phosphate. Tetramer of heterodimers (alpha,beta)4. It depends on Mg(2+) as a cofactor. The cofactor is Mn(2+).

It carries out the reaction hydrogencarbonate + L-glutamine + 2 ATP + H2O = carbamoyl phosphate + L-glutamate + 2 ADP + phosphate + 2 H(+). It catalyses the reaction hydrogencarbonate + NH4(+) + 2 ATP = carbamoyl phosphate + 2 ADP + phosphate + 2 H(+). It functions in the pathway amino-acid biosynthesis; L-arginine biosynthesis; carbamoyl phosphate from bicarbonate: step 1/1. The protein operates within pyrimidine metabolism; UMP biosynthesis via de novo pathway; (S)-dihydroorotate from bicarbonate: step 1/3. In terms of biological role, large subunit of the glutamine-dependent carbamoyl phosphate synthetase (CPSase). CPSase catalyzes the formation of carbamoyl phosphate from the ammonia moiety of glutamine, carbonate, and phosphate donated by ATP, constituting the first step of 2 biosynthetic pathways, one leading to arginine and/or urea and the other to pyrimidine nucleotides. The large subunit (synthetase) binds the substrates ammonia (free or transferred from glutamine from the small subunit), hydrogencarbonate and ATP and carries out an ATP-coupled ligase reaction, activating hydrogencarbonate by forming carboxy phosphate which reacts with ammonia to form carbamoyl phosphate. The chain is Carbamoyl phosphate synthase large chain from Thermotoga maritima (strain ATCC 43589 / DSM 3109 / JCM 10099 / NBRC 100826 / MSB8).